The primary structure comprises 76 residues: Sec-independent protein translocase protein TatA (76 aa).

A helical transmembrane segment spans residues 1–21 (MGGISIWQLLIIVAIIVLLFG). Residues 43–76 (MADDKSQPQDASFEKVEAKEAASTEQKAKEKEQA) are disordered.

It belongs to the TatA/E family. The Tat system comprises two distinct complexes: a TatABC complex, containing multiple copies of TatA, TatB and TatC subunits, and a separate TatA complex, containing only TatA subunits. Substrates initially bind to the TatABC complex, which probably triggers association of the separate TatA complex to form the active translocon.

It is found in the cell inner membrane. Part of the twin-arginine translocation (Tat) system that transports large folded proteins containing a characteristic twin-arginine motif in their signal peptide across membranes. TatA could form the protein-conducting channel of the Tat system. The polypeptide is Sec-independent protein translocase protein TatA (Actinobacillus pleuropneumoniae serotype 5b (strain L20)).